The following is a 186-amino-acid chain: Probable chorismate pyruvate-lyase (186 aa).

Residues Arg-78, Leu-116, and Glu-175 each coordinate substrate.

This sequence belongs to the UbiC family.

The protein localises to the cytoplasm. It carries out the reaction chorismate = 4-hydroxybenzoate + pyruvate. It participates in cofactor biosynthesis; ubiquinone biosynthesis. Functionally, removes the pyruvyl group from chorismate, with concomitant aromatization of the ring, to provide 4-hydroxybenzoate (4HB) for the ubiquinone pathway. The polypeptide is Probable chorismate pyruvate-lyase (Psychromonas ingrahamii (strain DSM 17664 / CCUG 51855 / 37)).